The chain runs to 147 residues: Leghemoglobin-1 (147 aa).

One can recognise a Globin domain in the interval 2–147; it reads SFTDKQEALV…LATAIKKAMS (146 aa). A nitrated tyrosine mark is found at Tyr-25 and Tyr-30. Ser-45 is a binding site for heme b. The residue at position 45 (Ser-45) is a Phosphoserine. Residue His-62 coordinates O2. Heme b is bound by residues Lys-65, His-94, and Lys-97. Position 135 is a nitrated tyrosine (Tyr-135).

This sequence belongs to the plant globin family. Monomer. Nitrated in effective nodules and particularly in hypoxic conditions; this mechanism may play a protective role in the symbiosis by buffering toxic peroxynitrite NO(2)(-). Nitration level decrease during nodule senescence. Post-translationally, phosphorylation at Ser-45 disrupts the molecular environment of its porphyrin ring oxygen binding pocket, thus leading to a reduced oxygen consumption and to the delivery of oxygen O(2) to symbiosomes. As to expression, root nodules.

It localises to the cytoplasm. The protein localises to the cytosol. Its subcellular location is the nucleus. Functionally, leghemoglobin that reversibly binds oxygen O(2) through a pentacoordinated heme iron. In root nodules, facilitates the diffusion of oxygen to the bacteroids while preventing the bacterial nitrogenase from being inactivated by buffering dioxygen, nitric oxide and carbon monoxide, and promoting the formation of reactive oxygen species (ROS, e.g. H(2)O(2)). This role is essential for symbiotic nitrogen fixation (SNF). This chain is Leghemoglobin-1, found in Medicago sativa (Alfalfa).